Reading from the N-terminus, the 209-residue chain is Probable glutathione peroxidase 8-B (209 aa).

Residues 18–40 form a helical membrane-spanning segment; it reads VFLVFFSMVLCTGILCVLQLKFL. The active site involves C79.

This sequence belongs to the glutathione peroxidase family.

It is found in the membrane. The catalysed reaction is 2 glutathione + H2O2 = glutathione disulfide + 2 H2O. In Xenopus laevis (African clawed frog), this protein is Probable glutathione peroxidase 8-B (gpx8-b).